Here is a 553-residue protein sequence, read N- to C-terminus: Cytochrome P450 monooxygenase alnD (553 aa).

A helical transmembrane segment spans residues 351-371 (LVGAGFVTSSAFLSWLIYSLV). A heme-binding site is contributed by cysteine 493. Residue asparagine 518 is glycosylated (N-linked (GlcNAc...) asparagine).

Belongs to the cytochrome P450 family. Requires heme as cofactor.

It localises to the membrane. The protein operates within polyketide biosynthesis. Its function is as follows. Cytochrome P450 monooxygenase; part of the gene cluster that mediates the biosynthesis of asperlin, a polyketide showing anti-inflammatory, antitumor and antibiotic activities. The first step of the asperlin biosynthesis is the production of the intermediate 2,4,6-octatrienoic acid by the highly redusing polyketide synthase alnA with cleavage of the PKS product by the esterase alnB. 2,4,6-octatrienoic acid is further converted to asperlin via several steps involving the remaining enzymes from the cluster. The sequence is that of Cytochrome P450 monooxygenase alnD from Emericella nidulans (strain FGSC A4 / ATCC 38163 / CBS 112.46 / NRRL 194 / M139) (Aspergillus nidulans).